Consider the following 200-residue polypeptide: dITP/XTP pyrophosphatase (200 aa).

Residue 7 to 12 (SNNYHK) coordinates substrate. D68 (proton acceptor) is an active-site residue. D68 contributes to the Mg(2+) binding site. Residues S69, 147–150 (FGYD), K170, and 175–176 (HR) contribute to the substrate site.

It belongs to the HAM1 NTPase family. As to quaternary structure, homodimer. It depends on Mg(2+) as a cofactor.

The catalysed reaction is XTP + H2O = XMP + diphosphate + H(+). The enzyme catalyses dITP + H2O = dIMP + diphosphate + H(+). It catalyses the reaction ITP + H2O = IMP + diphosphate + H(+). Its function is as follows. Pyrophosphatase that catalyzes the hydrolysis of nucleoside triphosphates to their monophosphate derivatives, with a high preference for the non-canonical purine nucleotides XTP (xanthosine triphosphate), dITP (deoxyinosine triphosphate) and ITP. Seems to function as a house-cleaning enzyme that removes non-canonical purine nucleotides from the nucleotide pool, thus preventing their incorporation into DNA/RNA and avoiding chromosomal lesions. The sequence is that of dITP/XTP pyrophosphatase from Acholeplasma laidlawii (strain PG-8A).